The following is a 414-amino-acid chain: Serine--tRNA ligase (414 aa).

230-232 (TAE) provides a ligand contact to L-serine. 261–263 (RKE) lines the ATP pocket. L-serine is bound at residue Glu-284. 348–351 (EISS) is a binding site for ATP. Ser-382 is an L-serine binding site.

The protein belongs to the class-II aminoacyl-tRNA synthetase family. Type-1 seryl-tRNA synthetase subfamily. Homodimer. The tRNA molecule binds across the dimer.

The protein resides in the cytoplasm. The catalysed reaction is tRNA(Ser) + L-serine + ATP = L-seryl-tRNA(Ser) + AMP + diphosphate + H(+). The enzyme catalyses tRNA(Sec) + L-serine + ATP = L-seryl-tRNA(Sec) + AMP + diphosphate + H(+). It functions in the pathway aminoacyl-tRNA biosynthesis; selenocysteinyl-tRNA(Sec) biosynthesis; L-seryl-tRNA(Sec) from L-serine and tRNA(Sec): step 1/1. Catalyzes the attachment of serine to tRNA(Ser). Is also able to aminoacylate tRNA(Sec) with serine, to form the misacylated tRNA L-seryl-tRNA(Sec), which will be further converted into selenocysteinyl-tRNA(Sec). This chain is Serine--tRNA ligase, found in Sulfurovum sp. (strain NBC37-1).